Consider the following 290-residue polypeptide: Cilia- and flagella-associated protein 298 (290 aa).

Belongs to the CFAP298 family. As to quaternary structure, interacts with dnaaf1/swt. Interacts with lrrc6/sea. Interacts with dvl (via DEP and PDZ domains). In terms of tissue distribution, strongly expressed in ciliated tissues of the embryonic trunk, including the pronephric ducts and spinal canal.

It is found in the cytoplasm. The protein localises to the cytoskeleton. The protein resides in the cilium basal body. Plays a role in motile cilium function, possibly by acting on outer dynein arm assembly. Seems to be important for initiation rather than maintenance of cilium motility. Required for correct positioning of cilia at the apical cell surface, suggesting an additional role in the planar cell polarity (PCP) pathway. May suppress canonical Wnt signaling activity. The polypeptide is Cilia- and flagella-associated protein 298 (Danio rerio (Zebrafish)).